A 195-amino-acid chain; its full sequence is Adenylate kinase (195 aa).

10–15 serves as a coordination point for ATP; the sequence is GSGKGT. The segment at 30–59 is NMP; it reads STGDILRAERAAGTLLGQQAQSYMDRGELV. AMP-binding positions include T31, R36, 57–59, 85–88, and Q92; these read ELV and GFPR. The LID stretch occupies residues 126–140; sequence NRAKQAVNGQQRSDD. R127 is an ATP binding site. Residues R137 and R148 each contribute to the AMP site. R176 is an ATP binding site.

It belongs to the adenylate kinase family. Monomer.

The protein resides in the cytoplasm. The enzyme catalyses AMP + ATP = 2 ADP. Its pathway is purine metabolism; AMP biosynthesis via salvage pathway; AMP from ADP: step 1/1. Catalyzes the reversible transfer of the terminal phosphate group between ATP and AMP. Plays an important role in cellular energy homeostasis and in adenine nucleotide metabolism. This chain is Adenylate kinase, found in Thermosynechococcus vestitus (strain NIES-2133 / IAM M-273 / BP-1).